Reading from the N-terminus, the 866-residue chain is MVANKDKATKRKIPAVDDAVKVSTANGKQQTKLKEPVDDESASDYYESDEENLFASIDNGNDEDSTDSEGEGEESDDEEVQEFESADSDFEDESGKDDEEEAEDEEDDADEEDADSADDVNSDSSPEPEEEESDDELEFEEDLEEPEQPKAIQKVIVGRQKKSVEATAEDEDEEDDEETRDLLEAAQKEDEKLGEIDAALGIAPAKTRGVGIFPPEAKSRFKGGKNQDEYAAGDTSDEEDIRNTVGNIPMHWYDEYKHIGYDWEGNRLIKPAKTDAIDDFLKKMEDPNFWRTVKDPQTGQNVVLTDEDIGLIKRIMAGKNPDEQYSDYEPWIEWFTSEVEKMPIRNIPDHKRSFLPSKSEKQKVGRLVHALKMGWIKTRAETERLAALSKGPKFYMIWESDHGKEEMRRIHDHVVAPKRPLPGHAESYNPPPEYLFNEQELAEWNSHEEEPWKRKLHYVPQKFNSLREVPYYDKYIRERFLRCLDLYLCPRGKRTRVTVGPEYLIPKLPSPKDLQPFPTLQNLIYKGHTDMIRSVSIEPKGEYLVTGSDDQTVKIWEVSTARCIRTIPTGDVVRSVAWCPNSKISLIAVASGKRVLLINPQVGDSLLVKKTDDLLAEAPKSETVDNERITTAVQWVDFTEEERKSGVRIVINHFKEIKQVTWHGRGDYFATVMPEAANRSVLIHQLSKRRSQFPFSKSKGLIQCVLFHPVKPCLFVATQRHVRVYDLVKQELLKKLFPSCKWISSMAIHPKGDNLLVATYEKKMMWFDLDLSTRPYQQLKLHHSAIRNVAFHLRYPLFASASDDRSVIVSHGMVYNDLLQNPLIVPLRRLEHHERVNDFGAFDVVFHPTQPWLFSSGADNTVRLYT.

Disordered regions lie at residues 1–180 (MVAN…EETR) and 214–241 (PPEA…EEDI). Acidic residues-rich tracts occupy residues 37–52 (VDDE…DEEN), 60–146 (GNDE…LEEP), and 167–179 (TAED…DEET). WD repeat units lie at residues 527–566 (GHTD…CIRT), 568–608 (PTGD…SLLV), 697–735 (KSKG…LLKK), 738–777 (PSCK…RPYQ), 781–820 (LHHS…DLLQ), and 836–866 (VNDF…RLYT).

It belongs to the WD repeat BOP1/ERB1 family.

The protein localises to the nucleus. Its subcellular location is the nucleolus. It localises to the nucleoplasm. Its function is as follows. Required for maturation of ribosomal RNAs and formation of the large ribosomal subunit. The chain is Ribosome biogenesis protein BOP1 homolog from Aedes aegypti (Yellowfever mosquito).